The sequence spans 311 residues: Geranylgeranyl transferase type-2 subunit alpha (311 aa).

Positions 12-43 (EKAKAQRLKELEKIESYNKLVKSFEELREKQN) form a coiled coil. 5 PFTA repeats span residues 49 to 82 (ISLSVSKLVLIENPEFYTIWNYRRLAILQFTETK), 93 to 126 (NEMKFLEECIQRFTKSYWIWFHRQWIALRMDNCD), 129 to 162 (REMKLCTKLLNFDLRNFHCWGHRRFILKHSNIKL), 164 to 197 (DELKYTTEKVEQNFSNYSAWHQRSSILPKIYKEP), and 206 to 239 (EEFELVRNAVYTEPKDSSSWIYHKWLVATIKSIP).

Belongs to the protein prenyltransferase subunit alpha family. As to quaternary structure, heterodimer of an alpha and a beta subunit.

It catalyses the reaction geranylgeranyl diphosphate + L-cysteinyl-[protein] = S-geranylgeranyl-L-cysteinyl-[protein] + diphosphate. Its function is as follows. Catalyzes the transfer of a geranylgeranyl moiety from geranylgeranyl diphosphate to proteins with a C-terminal sequence motif -XCC or -XCXC, where both cysteines may become modified. This chain is Geranylgeranyl transferase type-2 subunit alpha (rabggta), found in Dictyostelium discoideum (Social amoeba).